Here is a 119-residue protein sequence, read N- to C-terminus: Large ribosomal subunit protein bL19 (119 aa).

This sequence belongs to the bacterial ribosomal protein bL19 family.

In terms of biological role, this protein is located at the 30S-50S ribosomal subunit interface and may play a role in the structure and function of the aminoacyl-tRNA binding site. The polypeptide is Large ribosomal subunit protein bL19 (rplS) (Mycoplasma genitalium (strain ATCC 33530 / DSM 19775 / NCTC 10195 / G37) (Mycoplasmoides genitalium)).